We begin with the raw amino-acid sequence, 348 residues long: MNPFILSILLLSLGLGTTLTFASSHWLLAWMGLEISTLAIIPLMSQHHHPRAVEATTKYFITQAAAAALILFASTTNAWITGQWDINFDLHFFPASMLTMALALKMGLAPVHFWLPEVLQGLDLTTGLILSTWQKLAPFILMCQIMPVNSSLITFLGVTSTLVGGWGGLNQTQLRKILAYSSIAHLGWMILVMQFNQQLALLALIIYIPMTFSTFMIFKTNSSTTVNTLAASWAKTPALTAITPMILLSLGGLPPLSGFMPKWMILQELTKQDIPLTASIAALSALLSLYFYLRVSYAMTLTISPNNLNATTPWRLQTTASTLPLAISATISAMLLPLAPATLALLSL.

The next 10 helical transmembrane spans lie at 3-23 (PFIL…TFAS), 24-44 (SHWL…IPLM), 60-80 (FITQ…NAWI), 95-115 (ASML…HFWL), 136-156 (LAPF…ITFL), 177-197 (ILAY…QFNQ), 198-218 (QLAL…FMIF), 239-259 (LTAI…LSGF), 273-293 (DIPL…YFYL), and 325-345 (LAIS…TLAL).

Belongs to the complex I subunit 2 family.

The protein localises to the mitochondrion inner membrane. The catalysed reaction is a ubiquinone + NADH + 5 H(+)(in) = a ubiquinol + NAD(+) + 4 H(+)(out). Functionally, core subunit of the mitochondrial membrane respiratory chain NADH dehydrogenase (Complex I) that is believed to belong to the minimal assembly required for catalysis. Complex I functions in the transfer of electrons from NADH to the respiratory chain. The immediate electron acceptor for the enzyme is believed to be ubiquinone. This Gadus morhua (Atlantic cod) protein is NADH-ubiquinone oxidoreductase chain 2 (MT-ND2).